The sequence spans 212 residues: Eukaryotic translation initiation factor 4E-1 (212 aa).

Cysteines 125 and 129 form a disulfide.

The protein belongs to the eukaryotic initiation factor 4E family. As to quaternary structure, EIF4F is a multi-subunit complex, the composition of which varies with external and internal environmental conditions. It is composed of at least EIF4A, EIF4E and EIF4G. EIF4E is also known to interact with other partners, including pgl-1. Interacts with ifet-1. As to expression, enriched in the germline from L3 larvae to adults; regions of the gonad undergoing spermatogenesis. Expressed in germ granules (P granules); when associated with pgl-1.

Its subcellular location is the cytoplasm. In terms of biological role, recognizes and binds the 7-methylguanosine-containing mRNA cap during an early step in the initiation of protein synthesis and facilitates ribosome binding by inducing the unwinding of the mRNAs secondary structures. All 5 eIF4E proteins bind monomethyl cap structures. Only ife-1, ife-2 and ife-5 bind trimethyl cap structures which result from trans-splicing. Translation of trimethyl cap structure mRNAs may be regulated by intracellular redox state; disulfide bonds change the width and depth of the cap-binding cavity determining selectivity to mRNA caps. Required for progression through meiotic divisions during spermatogenesis and for the production of viable sperm. It is not required during oogenesis. The protein is Eukaryotic translation initiation factor 4E-1 (ife-1) of Caenorhabditis elegans.